A 390-amino-acid chain; its full sequence is Na(+)/H(+) antiporter NhaA 1 (390 aa).

11 helical membrane-spanning segments follow: residues 14–34 (SGIL…NGVL), 59–79 (TILW…GLEL), 94–114 (VALP…IFYV), 125–145 (GWAI…FLLG), 154–174 (LFLL…IAIF), 179–199 (LSII…ILNY), 205–225 (IYIY…SGIH), 260–280 (PIVA…VVFS), 295–315 (IIFG…FLAI), 328–348 (WLHL…SLFI), and 362–382 (ANKI…YFVL).

The protein belongs to the NhaA Na(+)/H(+) (TC 2.A.33) antiporter family.

Its subcellular location is the cell inner membrane. The catalysed reaction is Na(+)(in) + 2 H(+)(out) = Na(+)(out) + 2 H(+)(in). Na(+)/H(+) antiporter that extrudes sodium in exchange for external protons. The polypeptide is Na(+)/H(+) antiporter NhaA 1 (Campylobacter fetus subsp. fetus (strain 82-40)).